A 1012-amino-acid polypeptide reads, in one-letter code: F-box DNA helicase 1 (1012 aa).

The segment at 1 to 54 is disordered; sequence MHLTADDCEALSRSTEGLSSLTQPLNQRRSRGDVNRGLQPTHRTRTQPGAQGRQ. The span at 12–27 shows a compositional bias: polar residues; it reads SRSTEGLSSLTQPLNQ. In terms of domain architecture, F-box spans 185–234; the sequence is QGSIEDLPDEVLRSIFAFLPVTDLYQSLSLVCRRWRIIVGDPWFIPWKKL. In terms of domain architecture, UvrD-like helicase ATP-binding spans 427 to 692; the sequence is THEQQRILNH…YYLTQSFRFG (266 aa). Position 448–455 (448–455) interacts with ATP; sequence AFAGTGKT.

This sequence belongs to the helicase family. UvrD subfamily. As to quaternary structure, part of the SCF (SKP1-CUL1-F-box) E3 ubiquitin-protein ligase complex SCF(FBH1).

It is found in the nucleus. The protein localises to the chromosome. The enzyme catalyses Couples ATP hydrolysis with the unwinding of duplex DNA by translocating in the 3'-5' direction.. It catalyses the reaction ATP + H2O = ADP + phosphate + H(+). The protein operates within protein modification; protein ubiquitination. Its function is as follows. 3'-5' DNA helicase and substrate-recognition component of the SCF(FBH1) E3 ubiquitin ligase complex that plays a key role in response to stalled/damaged replication forks. Involved in genome maintenance by acting as an anti-recombinogenic helicase and preventing extensive strand exchange during homologous recombination: promotes RAD51 filament dissolution from stalled forks, thereby inhibiting homologous recombination and preventing excessive recombination. Also promotes cell death and DNA double-strand breakage in response to replication stress: promotes the endonucleolytic DNA cleavage following prolonged replication stress via its helicase activity, possibly to eliminate cells with excessive replication stress. In Gallus gallus (Chicken), this protein is F-box DNA helicase 1.